The chain runs to 352 residues: Zinc finger CCCH domain-containing protein 42 (352 aa).

Residues 36 to 114 (AYVYVGGIPF…RTIKVDHCGA (79 aa)) enclose the RRM domain. 2 C3H1-type zinc fingers span residues 130–157 (REAR…HDEK) and 180–207 (REGR…HDEK). The interval 156-179 (EKRAANTGWGHEEDRSSKWDHDKN) is disordered. Basic and acidic residues-rich tracts occupy residues 210–230 (ATTG…DKLN), 243–296 (GDFK…RSGR), and 304–352 (RHND…DRRR). Residues 210 to 352 (ATTGWGHEED…DSLRREDRRR (143 aa)) are disordered. Residues 319-348 (RAQDWEKRKAESRRDRNDREEKDRDSLRRE) are a coiled coil.

This Arabidopsis thaliana (Mouse-ear cress) protein is Zinc finger CCCH domain-containing protein 42.